Reading from the N-terminus, the 284-residue chain is Asialoglycoprotein receptor 1 (284 aa).

Residues Met-1–His-18 are compositionally biased toward basic and acidic residues. The disordered stretch occupies residues Met-1–Pro-25. The Cytoplasmic portion of the chain corresponds to Met-1–Arg-39. An Endocytosis signal motif is present at residues Tyr-5–Phe-8. Cys-35 carries the S-palmitoyl cysteine lipid modification. A helical; Signal-anchor for type II membrane protein transmembrane segment spans residues Leu-40 to Ser-60. Residues Thr-59–Glu-117 adopt a coiled-coil conformation. At Gln-61–Asn-284 the chain is on the extracellular side. N-linked (GlcNAc...) asparagine glycosylation is found at Asn-75, Asn-78, and Asn-146. Intrachain disulfides connect Cys-153–Cys-164, Cys-181–Cys-276, and Cys-254–Cys-268. The C-type lectin domain maps to Tyr-160–Glu-277. Val-190, Glu-196, Asp-215, Gln-239, Asp-241, Glu-252, Asp-253, Asn-264, Asp-265, and Glu-277 together coordinate Ca(2+).

As to quaternary structure, interacts with LASS2. Post-translationally, phosphorylated on a cytoplasmic Ser residue. In terms of tissue distribution, expressed exclusively in hepatic parenchymal cells.

Its subcellular location is the membrane. Functionally, mediates the endocytosis of plasma glycoproteins to which the terminal sialic acid residue on their complex carbohydrate moieties has been removed. The receptor recognizes terminal galactose and N-acetylgalactosamine units. After ligand binding to the receptor, the resulting complex is internalized and transported to a sorting organelle, where receptor and ligand are disassociated. The receptor then returns to the cell membrane surface. The polypeptide is Asialoglycoprotein receptor 1 (Asgr1) (Mus musculus (Mouse)).